We begin with the raw amino-acid sequence, 117 residues long: Ig heavy chain V region 5-76 (117 aa).

The N-terminal stretch at 1-19 (MNFVLSLIFLALILKGVQC) is a signal peptide. Residues 20–49 (EVHLVESGGGLVKPGGSLKLSCVVSGFTFN) form a framework-1 region. An intrachain disulfide couples cysteine 41 to cysteine 115. The interval 50–54 (KYAMS) is complementarity-determining-1. Positions 55–68 (WVRQTPEKRLEWVA) are framework-2. A complementarity-determining-2 region spans residues 69–85 (TISSGGLYTYYPDSVKG). Positions 86–117 (RFTISRDNAGNTLYLQMSSLRSEDTAMYYCAR) are framework-3.

This is Ig heavy chain V region 5-76 from Mus musculus (Mouse).